The primary structure comprises 206 residues: Thymidylate kinase (206 aa).

11–18 (GPEGAGKT) contributes to the ATP binding site.

It belongs to the thymidylate kinase family.

The enzyme catalyses dTMP + ATP = dTDP + ADP. Its function is as follows. Phosphorylation of dTMP to form dTDP in both de novo and salvage pathways of dTTP synthesis. The sequence is that of Thymidylate kinase (tmk) from Deinococcus radiodurans (strain ATCC 13939 / DSM 20539 / JCM 16871 / CCUG 27074 / LMG 4051 / NBRC 15346 / NCIMB 9279 / VKM B-1422 / R1).